A 162-amino-acid polypeptide reads, in one-letter code: Phosphopantetheine adenylyltransferase (162 aa).

Ser11 contacts substrate. Residues 11-12 (SF) and His19 contribute to the ATP site. Residues Lys43, Val76, and Arg90 each coordinate substrate. Residues 91–93 (GLR), Glu101, and 126–132 (HLYISSS) each bind ATP.

The protein belongs to the bacterial CoaD family. Homohexamer. Mg(2+) is required as a cofactor.

Its subcellular location is the cytoplasm. The catalysed reaction is (R)-4'-phosphopantetheine + ATP + H(+) = 3'-dephospho-CoA + diphosphate. Its pathway is cofactor biosynthesis; coenzyme A biosynthesis; CoA from (R)-pantothenate: step 4/5. Its function is as follows. Reversibly transfers an adenylyl group from ATP to 4'-phosphopantetheine, yielding dephospho-CoA (dPCoA) and pyrophosphate. This chain is Phosphopantetheine adenylyltransferase, found in Streptococcus pneumoniae (strain JJA).